The sequence spans 360 residues: Phospho-N-acetylmuramoyl-pentapeptide-transferase (360 aa).

Transmembrane regions (helical) follow at residues 24 to 44 (RAVM…PWTI), 69 to 89 (GTPT…TLLW), 92 to 112 (WANP…ALGF), 133 to 153 (MVWQ…LAAN), 158 to 178 (ILIV…GFLV), 199 to 219 (GLAT…AYAS), 239 to 259 (VVIF…FNAY), 263 to 283 (VFMG…VAVI), 288 to 308 (FVLV…MLQV), and 337 to 357 (QVVV…LSTL).

It belongs to the glycosyltransferase 4 family. MraY subfamily. It depends on Mg(2+) as a cofactor.

The protein resides in the cell inner membrane. It carries out the reaction UDP-N-acetyl-alpha-D-muramoyl-L-alanyl-gamma-D-glutamyl-meso-2,6-diaminopimeloyl-D-alanyl-D-alanine + di-trans,octa-cis-undecaprenyl phosphate = di-trans,octa-cis-undecaprenyl diphospho-N-acetyl-alpha-D-muramoyl-L-alanyl-D-glutamyl-meso-2,6-diaminopimeloyl-D-alanyl-D-alanine + UMP. Its pathway is cell wall biogenesis; peptidoglycan biosynthesis. In terms of biological role, catalyzes the initial step of the lipid cycle reactions in the biosynthesis of the cell wall peptidoglycan: transfers peptidoglycan precursor phospho-MurNAc-pentapeptide from UDP-MurNAc-pentapeptide onto the lipid carrier undecaprenyl phosphate, yielding undecaprenyl-pyrophosphoryl-MurNAc-pentapeptide, known as lipid I. The sequence is that of Phospho-N-acetylmuramoyl-pentapeptide-transferase from Neisseria meningitidis serogroup C / serotype 2a (strain ATCC 700532 / DSM 15464 / FAM18).